A 229-amino-acid polypeptide reads, in one-letter code: Large ribosomal subunit protein uL1 (229 aa).

The protein belongs to the universal ribosomal protein uL1 family. As to quaternary structure, part of the 50S ribosomal subunit.

Its function is as follows. Binds directly to 23S rRNA. The L1 stalk is quite mobile in the ribosome, and is involved in E site tRNA release. In terms of biological role, protein L1 is also a translational repressor protein, it controls the translation of the L11 operon by binding to its mRNA. The polypeptide is Large ribosomal subunit protein uL1 (Streptococcus thermophilus (strain CNRZ 1066)).